We begin with the raw amino-acid sequence, 1024 residues long: Gamma-tubulin complex component 5 (1024 aa).

Disordered stretches follow at residues I155–C203 and T521–Q545. Residues T189–C203 show a composition bias toward basic and acidic residues. The segment covering A531 to S543 has biased composition (low complexity).

Belongs to the TUBGCP family. Component of the gamma-tubulin ring complex (gTuRC) consisting of TUBGCP2, TUBGCP3, TUBGCP4, TUBGCP5 and TUBGCP6 and gamma-tubulin TUBG1 or TUBG2. TUBGCP2, TUBGCP3, TUBGCP4, TUBGCP5 and TUBGCP6 assemble in a 5:5:2:1:1 stoichiometry; each is associated with a gamma-tubulin, thereby arranging 14 gamma-tubulins in a helical manner. Gamma-tubulin at the first position is blocked by TUBGCP3 at the last position, allowing 13 protafilaments to grow into a microtubule. The gTuRC (via TUBGCP3 and TUBGCP6) interacts with ACTB and MZT1; the interactions form a luminal bridge that stabilizes the initial structure during complex assembly. The gTuRC (via TUBGCP2) interacts with MZT2A/MZT2B and CDK5RAP2 (via CM1 motif); the interactions play a role in gTuRC activation. In terms of tissue distribution, widely expressed, with highest levels in heart and skeletal muscle and moderate levels in brain.

Its subcellular location is the cytoplasm. The protein resides in the cytoskeleton. It is found in the microtubule organizing center. The protein localises to the centrosome. Component of the gamma-tubulin ring complex (gTuRC) which mediates microtubule nucleation. The gTuRC regulates the minus-end nucleation of alpha-beta tubulin heterodimers that grow into microtubule protafilaments, a critical step in centrosome duplication and spindle formation. In Homo sapiens (Human), this protein is Gamma-tubulin complex component 5 (TUBGCP5).